Here is a 157-residue protein sequence, read N- to C-terminus: MRVGYGYDVHRLQEGRRLVLGGVEIPHMQGLLGHSDADVLLHAICDALLGAAALGDIGQHFPDSDSQYKDINSLLLLKEVAGILQRAGWRVINVDSTVVAQEPRLAPHIKQMRQNIARVLAIESEQVSVKATTTEGLGFAGRQQGISAHAVVLIEQA.

A divalent metal cation contacts are provided by D8 and H10. 4-CDP-2-C-methyl-D-erythritol 2-phosphate contacts are provided by residues 8 to 10 (DVH) and 34 to 35 (HS). H42 is an a divalent metal cation binding site. Residues 56–58 (DIG), 61–65 (FPDSD), 132–135 (TTTE), F139, and R142 each bind 4-CDP-2-C-methyl-D-erythritol 2-phosphate.

It belongs to the IspF family. In terms of assembly, homotrimer. Requires a divalent metal cation as cofactor.

The enzyme catalyses 4-CDP-2-C-methyl-D-erythritol 2-phosphate = 2-C-methyl-D-erythritol 2,4-cyclic diphosphate + CMP. The protein operates within isoprenoid biosynthesis; isopentenyl diphosphate biosynthesis via DXP pathway; isopentenyl diphosphate from 1-deoxy-D-xylulose 5-phosphate: step 4/6. In terms of biological role, involved in the biosynthesis of isopentenyl diphosphate (IPP) and dimethylallyl diphosphate (DMAPP), two major building blocks of isoprenoid compounds. Catalyzes the conversion of 4-diphosphocytidyl-2-C-methyl-D-erythritol 2-phosphate (CDP-ME2P) to 2-C-methyl-D-erythritol 2,4-cyclodiphosphate (ME-CPP) with a corresponding release of cytidine 5-monophosphate (CMP). The polypeptide is 2-C-methyl-D-erythritol 2,4-cyclodiphosphate synthase (Syntrophomonas wolfei subsp. wolfei (strain DSM 2245B / Goettingen)).